A 179-amino-acid polypeptide reads, in one-letter code: Large ribosomal subunit protein uL6 (179 aa).

Belongs to the universal ribosomal protein uL6 family. As to quaternary structure, part of the 50S ribosomal subunit.

Functionally, this protein binds to the 23S rRNA, and is important in its secondary structure. It is located near the subunit interface in the base of the L7/L12 stalk, and near the tRNA binding site of the peptidyltransferase center. The sequence is that of Large ribosomal subunit protein uL6 from Syntrophus aciditrophicus (strain SB).